The primary structure comprises 145 residues: Hemoglobin subunit beta-2 (145 aa).

Residues 2 to 145 (HLTDQEIKYI…VADAVGKGYH (144 aa)) enclose the Globin domain. 2 residues coordinate heme b: H63 and H91.

This sequence belongs to the globin family. Red blood cells.

This chain is Hemoglobin subunit beta-2, found in Telmatobius peruvianus (Andean frog).